Reading from the N-terminus, the 168-residue chain is Avenin-like a1 (168 aa).

Residues 1 to 19 form the signal peptide; sequence MKTMFLLALLAFTATSAVA.

The protein belongs to the prolamin family. Contains 7 disulfide bonds.

Functionally, seed storage protein. Not integrated in the gluten polymer through disulfide bonds, unless incorporated by reduction and reoxidation during dough making. Increases dough strength and bread volume, but decreases dough stability when added into a base wheat flour. The polypeptide is Avenin-like a1 (AVNLA) (Triticum aestivum (Wheat)).